The following is a 125-amino-acid chain: Small ribosomal subunit protein uS13 (125 aa).

This sequence belongs to the universal ribosomal protein uS13 family. Part of the 30S ribosomal subunit. Forms a loose heterodimer with protein S19. Forms two bridges to the 50S subunit in the 70S ribosome.

In terms of biological role, located at the top of the head of the 30S subunit, it contacts several helices of the 16S rRNA. In the 70S ribosome it contacts the 23S rRNA (bridge B1a) and protein L5 of the 50S subunit (bridge B1b), connecting the 2 subunits; these bridges are implicated in subunit movement. Contacts the tRNAs in the A and P-sites. The sequence is that of Small ribosomal subunit protein uS13 from Rickettsia africae (strain ESF-5).